A 136-amino-acid polypeptide reads, in one-letter code: Transcription antitermination protein NusB (136 aa).

It belongs to the NusB family.

Functionally, involved in transcription antitermination. Required for transcription of ribosomal RNA (rRNA) genes. Binds specifically to the boxA antiterminator sequence of the ribosomal RNA (rrn) operons. This is Transcription antitermination protein NusB from Salinispora arenicola (strain CNS-205).